The chain runs to 27 residues: CD59 glycoprotein (27 aa).

Cystine bridges form between Cys-3/Cys-25 and Cys-6/Cys-12. Residue Asn-17 is glycosylated (N-linked (GlcNAc...) asparagine).

In terms of assembly, interacts with T-cell surface antigen CD2. N- and O-glycosylated. As to expression, expressed in erythrocytes and lymphocytes. Not detected in platelets.

Its subcellular location is the cell membrane. The protein localises to the secreted. In terms of biological role, potent inhibitor of the complement membrane attack complex (MAC) action, which protects self-cells from damage during complement activation. Acts by binding to the beta-haipins of C8 (C8A and C8B) components of the assembling MAC, forming an intermolecular beta-sheet that prevents incorporation of the multiple copies of C9 required for complete formation of the osmolytic pore. The polypeptide is CD59 glycoprotein (Ovis aries (Sheep)).